The primary structure comprises 368 residues: tRNA-specific 2-thiouridylase MnmA (368 aa).

ATP is bound by residues 11–18 (GMSGGVDS) and Met-37. The interval 97 to 99 (NPD) is interaction with target base in tRNA. Residue Cys-102 is the Nucleophile of the active site. An intrachain disulfide couples Cys-102 to Cys-199. Gly-127 contributes to the ATP binding site. Residues 149 to 151 (KDQ) form an interaction with tRNA region. The active-site Cysteine persulfide intermediate is the Cys-199. The segment at 311 to 312 (RY) is interaction with tRNA.

This sequence belongs to the MnmA/TRMU family. Interacts with TusE.

The protein localises to the cytoplasm. The enzyme catalyses S-sulfanyl-L-cysteinyl-[protein] + uridine(34) in tRNA + AH2 + ATP = 2-thiouridine(34) in tRNA + L-cysteinyl-[protein] + A + AMP + diphosphate + H(+). Catalyzes the 2-thiolation of uridine at the wobble position (U34) of tRNA(Lys), tRNA(Glu) and tRNA(Gln), leading to the formation of s(2)U34, the first step of tRNA-mnm(5)s(2)U34 synthesis. Sulfur is provided by IscS, via a sulfur-relay system. Binds ATP and its substrate tRNAs. The polypeptide is tRNA-specific 2-thiouridylase MnmA (Salmonella typhimurium (strain LT2 / SGSC1412 / ATCC 700720)).